The chain runs to 208 residues: Riboflavin synthase (208 aa).

Lumazine-binding repeat units lie at residues Met1–His97 and Ile98–Thr195. 2,4-dihydroxypteridine is bound by residues Gly4–Val6, Cys48–Thr50, Asp62–Thr67, Gly101–Ile103, Lys137, Ser146–Thr148, and Ser160–Thr165.

Homotrimer.

It carries out the reaction 2 6,7-dimethyl-8-(1-D-ribityl)lumazine + H(+) = 5-amino-6-(D-ribitylamino)uracil + riboflavin. It participates in cofactor biosynthesis; riboflavin biosynthesis; riboflavin from 2-hydroxy-3-oxobutyl phosphate and 5-amino-6-(D-ribitylamino)uracil: step 2/2. In terms of biological role, catalyzes the dismutation of two molecules of 6,7-dimethyl-8-ribityllumazine, resulting in the formation of riboflavin and 5-amino-6-(D-ribitylamino)uracil. The polypeptide is Riboflavin synthase (ribE) (Buchnera aphidicola subsp. Schizaphis graminum (strain Sg)).